A 453-amino-acid polypeptide reads, in one-letter code: Probable glycine dehydrogenase (decarboxylating) subunit 1 (453 aa).

This sequence belongs to the GcvP family. N-terminal subunit subfamily. The glycine cleavage system is composed of four proteins: P, T, L and H. In this organism, the P 'protein' is a heterodimer of two subunits.

It catalyses the reaction N(6)-[(R)-lipoyl]-L-lysyl-[glycine-cleavage complex H protein] + glycine + H(+) = N(6)-[(R)-S(8)-aminomethyldihydrolipoyl]-L-lysyl-[glycine-cleavage complex H protein] + CO2. In terms of biological role, the glycine cleavage system catalyzes the degradation of glycine. The P protein binds the alpha-amino group of glycine through its pyridoxal phosphate cofactor; CO(2) is released and the remaining methylamine moiety is then transferred to the lipoamide cofactor of the H protein. In Dictyoglomus thermophilum (strain ATCC 35947 / DSM 3960 / H-6-12), this protein is Probable glycine dehydrogenase (decarboxylating) subunit 1.